The sequence spans 457 residues: Allantoinase (457 aa).

Zn(2+) contacts are provided by His-58, His-60, Lys-145, His-181, His-237, and Asp-310. Residue Lys-145 is modified to N6-carboxylysine.

Belongs to the metallo-dependent hydrolases superfamily. Allantoinase family. As to quaternary structure, homotetramer. Requires Zn(2+) as cofactor. Carboxylation allows a single lysine to coordinate two zinc ions.

It carries out the reaction (S)-allantoin + H2O = allantoate + H(+). Its pathway is nitrogen metabolism; (S)-allantoin degradation; allantoate from (S)-allantoin: step 1/1. Functionally, catalyzes the conversion of allantoin (5-ureidohydantoin) to allantoic acid by hydrolytic cleavage of the five-member hydantoin ring. This Solibacter usitatus (strain Ellin6076) protein is Allantoinase.